We begin with the raw amino-acid sequence, 183 residues long: Akirin-1B (183 aa).

Residues 14 to 43 form a disordered region; the sequence is EALMSPQSPKRRRCAPLPGSPATPSPQRCG. Positions 180–183 match the SYVS motif motif; the sequence is SYVS.

This sequence belongs to the akirin family.

The protein resides in the nucleus. Its function is as follows. Molecular adapter that acts as a bridge between proteins, and which is involved skeletal muscle development. Functions as a signal transducer for MSTN during skeletal muscle regeneration and myogenesis. The chain is Akirin-1B (akirin1-b) from Xenopus laevis (African clawed frog).